The chain runs to 195 residues: Shikimate kinase (195 aa).

31-36 (GAGKSC) provides a ligand contact to ATP. Mg(2+) is bound at residue S35. Positions 53, 77, and 99 each coordinate substrate. An ATP-binding site is contributed by R137. R156 contacts substrate.

The protein belongs to the shikimate kinase family. Monomer. Mg(2+) is required as a cofactor.

It is found in the cytoplasm. It carries out the reaction shikimate + ATP = 3-phosphoshikimate + ADP + H(+). Its pathway is metabolic intermediate biosynthesis; chorismate biosynthesis; chorismate from D-erythrose 4-phosphate and phosphoenolpyruvate: step 5/7. Its function is as follows. Catalyzes the specific phosphorylation of the 3-hydroxyl group of shikimic acid using ATP as a cosubstrate. In Paramagnetospirillum magneticum (strain ATCC 700264 / AMB-1) (Magnetospirillum magneticum), this protein is Shikimate kinase.